The following is a 590-amino-acid chain: Leucine-rich repeat transmembrane neuronal protein 4 (590 aa).

The signal sequence occupies residues 1-30 (MGFHLITQLKGMSVVLVLLPTLLLVMLTGA). Residues 31-61 (QRACPKNCRCDGKIVYCESHAFADIPENISG) enclose the LRRNT domain. Topologically, residues 31-424 (QRACPKNCRC…QEYEHVSFHK (394 aa)) are extracellular. The N-linked (GlcNAc...) asparagine glycan is linked to Asn58. LRR repeat units lie at residues 62 to 83 (GSQGLSLRFNSIQKLKSNQFAG), 86 to 107 (QLIWLYLDHNYISSVDEDAFQG), 110 to 131 (RLKELILSSNKITYLHNKTFHP), 134 to 155 (NLRNLDLSYNKLQTLQSEQFKG), 158 to 179 (KLIILHLRSNSLKTVPIRVFQD), 182 to 203 (NLDFLDLGYNRLRSLSRNAFAG), 206 to 226 (KLKELHLEHNQFSKINFAHFP), 230 to 251 (NLRSIYLQWNRIRSISQGLTWT), 254 to 275 (SLHNLDLSGNDIQGIEPGTFKC), and 278 to 299 (NLQKLNLDSNKLTNISQETVNA). The N-linked (GlcNAc...) asparagine glycan is linked to Asn126. Asn291 carries N-linked (GlcNAc...) asparagine glycosylation. In terms of domain architecture, LRRCT spans 311–362 (NMWECSRSICPLFYWLKNFKGNKESTMICAGPKHIQGEKVSDAVETYNICSE). Residues 425 to 445 (IIAGSVALFLSVAMILLVIYV) form a helical membrane-spanning segment. Topologically, residues 446–590 (SWKRYPASMK…PAIYLERIAN (145 aa)) are cytoplasmic.

It belongs to the LRRTM family. Peripherally associated with AMPAR complex. AMPAR complex consists of an inner core made of 4 pore-forming GluA/GRIA proteins (GRIA1, GRIA2, GRIA3 and GRIA4) and 4 major auxiliary subunits arranged in a twofold symmetry. One of the two pairs of distinct binding sites is occupied either by CNIH2, CNIH3 or CACNG2, CACNG3. The other harbors CACNG2, CACNG3, CACNG4, CACNG8 or GSG1L. This inner core of AMPAR complex is complemented by outer core constituents binding directly to the GluA/GRIA proteins at sites distinct from the interaction sites of the inner core constituents. Outer core constituents include at least PRRT1, PRRT2, CKAMP44/SHISA9, FRRS1L and NRN1. The proteins of the inner and outer core serve as a platform for other, more peripherally associated AMPAR constituents, including LRRTM4. Alone or in combination, these auxiliary subunits control the gating and pharmacology of the AMPAR complex and profoundly impact their biogenesis and protein processing. In terms of tissue distribution, expressed in neuronal tissues.

Its subcellular location is the cell membrane. The protein localises to the postsynaptic cell membrane. Its function is as follows. May play a role in the development and maintenance of the vertebrate nervous system. Exhibits strong synaptogenic activity, restricted to excitatory presynaptic differentiation. The protein is Leucine-rich repeat transmembrane neuronal protein 4 (LRRTM4) of Homo sapiens (Human).